A 668-amino-acid chain; its full sequence is Fructose-1,6-bisphosphatase class 3 (668 aa).

This sequence belongs to the FBPase class 3 family. Mn(2+) serves as cofactor.

The catalysed reaction is beta-D-fructose 1,6-bisphosphate + H2O = beta-D-fructose 6-phosphate + phosphate. The protein operates within carbohydrate biosynthesis; gluconeogenesis. In Clostridium botulinum (strain Langeland / NCTC 10281 / Type F), this protein is Fructose-1,6-bisphosphatase class 3.